Consider the following 206-residue polypeptide: MTALNSTCSLQPRTAFVQRRTAETDVQVRLSLDGKGQHEIDTGIPFLDHMLAQLSTHGLIDLQIKAVGDLHIDDHHTNEDVGIALGQALAQALQDRRGIYRFGHFWAPLDEALVQVVLDFSGRPHLSYGLELTVERIGRYETQLVREFYQAVANHAQMTLHIRQAAGLNAHHIVEASFKAFARALRMAVERDPRRQDGIPSSKGVL.

This sequence belongs to the imidazoleglycerol-phosphate dehydratase family.

Its subcellular location is the cytoplasm. It carries out the reaction D-erythro-1-(imidazol-4-yl)glycerol 3-phosphate = 3-(imidazol-4-yl)-2-oxopropyl phosphate + H2O. It functions in the pathway amino-acid biosynthesis; L-histidine biosynthesis; L-histidine from 5-phospho-alpha-D-ribose 1-diphosphate: step 6/9. The polypeptide is Imidazoleglycerol-phosphate dehydratase (Synechococcus sp. (strain JA-3-3Ab) (Cyanobacteria bacterium Yellowstone A-Prime)).